The sequence spans 183 residues: Archaemetzincin (183 aa).

Histidine 131 is a Zn(2+) binding site. Catalysis depends on glutamate 132, which acts as the Proton acceptor. Zn(2+)-binding residues include histidine 135, histidine 141, cysteine 142, cysteine 147, cysteine 166, and cysteine 169.

This sequence belongs to the peptidase M54 family. In terms of assembly, monomer. Requires Zn(2+) as cofactor.

In terms of biological role, probable zinc metalloprotease whose natural substrate is unknown. The sequence is that of Archaemetzincin from Saccharolobus islandicus (strain L.S.2.15 / Lassen #1) (Sulfolobus islandicus).